A 163-amino-acid polypeptide reads, in one-letter code: ATP synthase subunit b (163 aa).

A helical membrane pass occupies residues 10-29; it reads ALYQLLAFSVLLFFLSKFAL.

This sequence belongs to the ATPase B chain family. As to quaternary structure, F-type ATPases have 2 components, F(1) - the catalytic core - and F(0) - the membrane proton channel. F(1) has five subunits: alpha(3), beta(3), gamma(1), delta(1), epsilon(1). F(0) has three main subunits: a(1), b(2) and c(10-14). The alpha and beta chains form an alternating ring which encloses part of the gamma chain. F(1) is attached to F(0) by a central stalk formed by the gamma and epsilon chains, while a peripheral stalk is formed by the delta and b chains.

The protein localises to the cell membrane. In terms of biological role, f(1)F(0) ATP synthase produces ATP from ADP in the presence of a proton or sodium gradient. F-type ATPases consist of two structural domains, F(1) containing the extramembraneous catalytic core and F(0) containing the membrane proton channel, linked together by a central stalk and a peripheral stalk. During catalysis, ATP synthesis in the catalytic domain of F(1) is coupled via a rotary mechanism of the central stalk subunits to proton translocation. Its function is as follows. Component of the F(0) channel, it forms part of the peripheral stalk, linking F(1) to F(0). This Alkalihalophilus pseudofirmus (strain ATCC BAA-2126 / JCM 17055 / OF4) (Bacillus pseudofirmus) protein is ATP synthase subunit b.